The following is a 195-amino-acid chain: Peptidyl-tRNA hydrolase (195 aa).

Tyrosine 18 contributes to the tRNA binding site. Residue histidine 23 is the Proton acceptor of the active site. TRNA contacts are provided by phenylalanine 69, asparagine 71, and asparagine 117.

Belongs to the PTH family. As to quaternary structure, monomer.

Its subcellular location is the cytoplasm. It catalyses the reaction an N-acyl-L-alpha-aminoacyl-tRNA + H2O = an N-acyl-L-amino acid + a tRNA + H(+). Hydrolyzes ribosome-free peptidyl-tRNAs (with 1 or more amino acids incorporated), which drop off the ribosome during protein synthesis, or as a result of ribosome stalling. Its function is as follows. Catalyzes the release of premature peptidyl moieties from peptidyl-tRNA molecules trapped in stalled 50S ribosomal subunits, and thus maintains levels of free tRNAs and 50S ribosomes. The protein is Peptidyl-tRNA hydrolase of Alcanivorax borkumensis (strain ATCC 700651 / DSM 11573 / NCIMB 13689 / SK2).